A 614-amino-acid polypeptide reads, in one-letter code: UvrABC system protein C (614 aa).

Positions 26–104 constitute a GIY-YIG domain; that stretch reads NLPGVYKMLG…IKEHRPPYNV (79 aa). A UVR domain is found at 215 to 250; sequence SDIHTTLIEKMEHSAEALDFEKAAFYRDQLSMLREV.

The protein belongs to the UvrC family. In terms of assembly, interacts with UvrB in an incision complex.

It is found in the cytoplasm. In terms of biological role, the UvrABC repair system catalyzes the recognition and processing of DNA lesions. UvrC both incises the 5' and 3' sides of the lesion. The N-terminal half is responsible for the 3' incision and the C-terminal half is responsible for the 5' incision. This Psychrobacter sp. (strain PRwf-1) protein is UvrABC system protein C.